The primary structure comprises 530 residues: S-adenosylhomocysteine hydrolase-like protein 1 (530 aa).

Met1 is modified (N-acetylmethionine). Position 2 is an N-acetylserine (Ser2). Ser2 bears the Phosphoserine mark. N6-acetyllysine is present on Lys40. The tract at residues 53–103 (KFPTKTGRRSLSRSISQSSTDSYSSAASYTDSSDDEVSPREKQQTNSKGSS) is disordered. Over residues 64–83 (SRSISQSSTDSYSSAASYTD) the composition is skewed to low complexity. The tract at residues 65–92 (RSISQSSTDSYSSAASYTDSSDDEVSPR) is PEST. 5 positions are modified to phosphoserine: Ser68, Ser71, Ser74, Ser77, and Ser84. Positions 138-201 (QGEKPLAGAK…EAGVAVFAWK (64 aa)) are interaction with BCL2L10. Positions 155, 229, 254, 284, and 288 each coordinate substrate. The interval 281 to 448 (SVTKQKFDNL…EGRLLNLSCS (168 aa)) is NAD binding. Residues 318 to 322 (GYGEV), Glu341, and Asn376 each bind NAD(+). Phosphoserine is present on Ser391. Residue 397 to 399 (MGH) coordinates NAD(+). The segment at 520-530 (NGPFKPNYYRY) is PDZ-binding.

This sequence belongs to the adenosylhomocysteinase family. In terms of assembly, forms multimers. Forms heteromultimers with AHCYL2 (via the C-terminal region). Interacts (when phosphorylated) with ITPR1 (when not phosphorylated); the interaction suppresses inositol 1,4,5-trisphosphate binding to ITPR1. Interacts with BCL2L10; this strengthens the interaction of AHCYL1 with ITPR1. Interacts with CFTR and SLC26A6; the interactions take place once AHCYL1 is released from ITPR1 and increase CFTR and SLC26A6 activities. Interacts with RRM1; in a phosphorylation- and (dATP)-dependent manner. Interacts (via PEST domain when phosphorylated) with SLC4A4 isoform 1 but not isoform 2; the interaction increases SLC4A4 isoform 1 activity. Interacts (when phosphorylated) with SLC9A3; the interaction is required for SLC9A3 apical location and activity. Interacts (when phosphorylated) with FIP1L1; the interaction is direct and associates AHCYL1 with the CPSF complex and RNA. Interacts with PAPOLA. Interacts with ZCCHC4. Interacts with AHCY. NAD(+) is required as a cofactor. In terms of processing, phosphorylated at Ser/Thr residues between Ser-68 and Thr-72 in the PEST region: required for interaction with dATP-bound RRM1 and ITPR1. Phosphorylation at Ser-68 by PRKD1 and CAMK4 is required for further phosphorylations by CSNK1A1. Phosphorylation is induced by oxidative stress. Probably phosphorylated by CAMK2A; phosphorylation at Ser-68 may be required for interaction with SLC9A3. Dephosphorylated in response to apoptotic stress conditions which causes translocation of both AHCYL1 and BCL2L10 from mitochondria-associated endoplasmic reticulum membranes and promotes apoptosis. Expressed in dendritic cells.

The protein resides in the endoplasmic reticulum. It is found in the cytoplasm. The protein localises to the cytosol. It localises to the apical cell membrane. Its subcellular location is the microsome. Functionally, multifaceted cellular regulator which coordinates several essential cellular functions including regulation of epithelial HCO3(-) and fluid secretion, mRNA processing and DNA replication. Regulates ITPR1 sensitivity to inositol 1,4,5-trisphosphate, competing for the common binding site and acting as endogenous 'pseudoligand' whose inhibitory activity can be modulated by its phosphorylation status. Promotes the formation of contact points between the endoplasmic reticulum (ER) and mitochondria, facilitating transfer of Ca(2+) from the ER to mitochondria. Under normal cellular conditions, functions cooperatively with BCL2L10 to limit ITPR1-mediated Ca(2+) release but, under apoptotic stress conditions, dephosphorylated which promotes dissociation of both AHCYL1 and BCL2L10 from mitochondria-associated endoplasmic reticulum membranes, inhibits BCL2L10 interaction with ITPR1 and leads to increased Ca(2+) transfer to mitochondria which promotes apoptosis. In the pancreatic and salivary ducts, at resting state, attenuates inositol 1,4,5-trisphosphate-induced calcium release by interacting with ITPR1. When extracellular stimuli induce ITPR1 phosphorylation or inositol 1,4,5-trisphosphate production, dissociates from ITPR1 to interact with CFTR and SLC26A6, mediating their synergistic activation by calcium and cAMP that stimulates the epithelial secretion of electrolytes and fluid. Also activates basolateral SLC4A4 isoform 1 to coordinate fluid and HCO3(-) secretion. Inhibits the effect of STK39 on SLC4A4 and CFTR by recruiting PP1 phosphatase which activates SLC4A4, SLC26A6 and CFTR through dephosphorylation. Mediates the induction of SLC9A3 surface expression produced by Angiotensin-2. Depending on the cell type, activates SLC9A3 in response to calcium or reverses SLC9A3R2-dependent calcium inhibition. May modulate the polyadenylation state of specific mRNAs, both by controlling the subcellular location of FIP1L1 and by inhibiting PAPOLA activity, in response to a stimulus that alters its phosphorylation state. Acts as a (dATP)-dependent inhibitor of ribonucleotide reductase large subunit RRM1, controlling the endogenous dNTP pool and ensuring normal cell cycle progression. In vitro does not exhibit any S-adenosyl-L-homocysteine hydrolase activity. This is S-adenosylhomocysteine hydrolase-like protein 1 from Homo sapiens (Human).